Reading from the N-terminus, the 122-residue chain is MIQMQTTLGVADNSGARQVQCIKVLGGSRRRYAGIGDIIKVSVKDAIPRGRVKKGEVYNAVVVRTRRGVRRPDGSVIRFDGNAAVLLNNQLQPIGTRVFGPVTRELRSEKFMRIISLAPEVL.

Belongs to the universal ribosomal protein uL14 family. Part of the 50S ribosomal subunit. Forms a cluster with proteins L3 and L19. In the 70S ribosome, L14 and L19 interact and together make contacts with the 16S rRNA in bridges B5 and B8.

Binds to 23S rRNA. Forms part of two intersubunit bridges in the 70S ribosome. The chain is Large ribosomal subunit protein uL14 from Alkalilimnicola ehrlichii (strain ATCC BAA-1101 / DSM 17681 / MLHE-1).